Consider the following 568-residue polypeptide: Oxygen-dependent choline dehydrogenase (568 aa).

8–37 (DYVIIGGGSAGSVLGNRLTEDKDKEVLVLE) provides a ligand contact to FAD. The active-site Proton acceptor is the H473.

Belongs to the GMC oxidoreductase family. It depends on FAD as a cofactor.

It carries out the reaction choline + A = betaine aldehyde + AH2. The catalysed reaction is betaine aldehyde + NAD(+) + H2O = glycine betaine + NADH + 2 H(+). It functions in the pathway amine and polyamine biosynthesis; betaine biosynthesis via choline pathway; betaine aldehyde from choline (cytochrome c reductase route): step 1/1. Its function is as follows. Involved in the biosynthesis of the osmoprotectant glycine betaine. Catalyzes the oxidation of choline to betaine aldehyde and betaine aldehyde to glycine betaine at the same rate. In Staphylococcus haemolyticus (strain JCSC1435), this protein is Oxygen-dependent choline dehydrogenase.